An 873-amino-acid polypeptide reads, in one-letter code: Nonsense-mediated mRNA decay factor SMG8 (873 aa).

The disordered stretch occupies residues 531–604 (AKKMAQREDE…ESMASKTERE (74 aa)). Residues 540–550 (ELAEEDTDLDI) show a composition bias toward acidic residues. Low complexity-rich tracts occupy residues 551–562 (PESLLDPDSTSP) and 574–583 (SSSESSSQES). Residues 591–604 (SRRDESMASKTERE) are compositionally biased toward basic and acidic residues.

It belongs to the SMG8 family.

Involved in nonsense-mediated decay (NMD) of mRNAs containing premature stop codons. Probable component of kinase complex containing smg-1 and recruited to stalled ribosomes. The chain is Nonsense-mediated mRNA decay factor SMG8 (smg-8) from Caenorhabditis elegans.